The following is a 391-amino-acid chain: Putative ABC transporter glucose-binding protein TsgA13 (391 aa).

An N-terminal signal peptide occupies residues 1 to 28 (MLDEESSIQRRDVLSALGAAGVTTLAGC). Positions 24–71 (TLAGCTGGDTGDTDDTEASETTASEGTTSGTTTGDVETTDGGGPSEGE) are disordered. Over residues 42–59 (SETTASEGTTSGTTTGDV) the composition is skewed to low complexity.

It belongs to the BMP lipoprotein family. As to quaternary structure, the complex is composed of two ATP-binding proteins (TsgD13), two transmembrane proteins (TsgB13 and TsgC13) and a solute-binding protein (TsgA13).

Its function is as follows. Part of an ABC transporter complex involved in glucose import. In Haloferax volcanii (strain ATCC 29605 / DSM 3757 / JCM 8879 / NBRC 14742 / NCIMB 2012 / VKM B-1768 / DS2) (Halobacterium volcanii), this protein is Putative ABC transporter glucose-binding protein TsgA13 (tsgA13).